We begin with the raw amino-acid sequence, 930 residues long: Translation initiation factor IF-2 (930 aa).

The interval 27-342 (LGLDVKSHSS…APKPVTERKF (316 aa)) is disordered. A compositionally biased stretch (low complexity) spans 52 to 103 (KAAAPQAPAEKPVAAQPSPQKTPAKEAAPVKAEPTEAKAAAQPEAKTETAAP). Basic and acidic residues-rich tracts occupy residues 112–128 (FKAE…ERRK) and 136–178 (QNKE…DGRR). The segment covering 183–195 (HQGFNGQKRQQPQ) has biased composition (polar residues). A compositionally biased stretch (basic and acidic residues) spans 218–245 (RSSEERFKQAQEAKEVMERQNRRKEQPK). The segment covering 251 to 268 (PVQPAPAPSAPAANPSPA) has biased composition (pro residues). Residues 280–297 (ARPDKKRDDFDREEEGPR) are compositionally biased toward basic and acidic residues. Positions 302 to 318 (NRSSQNQVRNQRNSNWN) are enriched in low complexity. The region spanning 432-599 (ERPPVVTIMG…TVLLVAEIQE (168 aa)) is the tr-type G domain. Positions 441 to 448 (GHVDHGKT) are G1. Residue 441 to 448 (GHVDHGKT) coordinates GTP. Positions 466-470 (GITQH) are G2. The segment at 487 to 490 (DTPG) is G3. Residues 487-491 (DTPGH) and 541-544 (NKID) contribute to the GTP site. Positions 541-544 (NKID) are G4. A G5 region spans residues 577 to 579 (SAK).

Belongs to the TRAFAC class translation factor GTPase superfamily. Classic translation factor GTPase family. IF-2 subfamily.

The protein resides in the cytoplasm. Its function is as follows. One of the essential components for the initiation of protein synthesis. Protects formylmethionyl-tRNA from spontaneous hydrolysis and promotes its binding to the 30S ribosomal subunits. Also involved in the hydrolysis of GTP during the formation of the 70S ribosomal complex. This Streptococcus sanguinis (strain SK36) protein is Translation initiation factor IF-2.